Consider the following 122-residue polypeptide: MIQQESRLKVADNTGAKEILCIRVLGGSSRRYASIGDVIVGTVKDAIPGGNVKRGDVVKAVVVRTAKECRRPDGSYIKFDENAAVIIKPDNDPRGTRIFGPVGRELREKRFMKIISLAPEVL.

Belongs to the universal ribosomal protein uL14 family. Part of the 50S ribosomal subunit. Forms a cluster with proteins L3 and L19. In the 70S ribosome, L14 and L19 interact and together make contacts with the 16S rRNA in bridges B5 and B8.

Binds to 23S rRNA. Forms part of two intersubunit bridges in the 70S ribosome. The sequence is that of Large ribosomal subunit protein uL14 from Mycobacterium leprae (strain TN).